Consider the following 1400-residue polypeptide: DNA-directed RNA polymerase subunit beta' (1400 aa).

4 residues coordinate Zn(2+): Cys71, Cys73, Cys86, and Cys89. Mg(2+)-binding residues include Asp462, Asp464, and Asp466. Zn(2+) contacts are provided by Cys810, Cys884, Cys891, and Cys894.

The protein belongs to the RNA polymerase beta' chain family. In terms of assembly, the RNAP catalytic core consists of 2 alpha, 1 beta, 1 beta' and 1 omega subunit. When a sigma factor is associated with the core the holoenzyme is formed, which can initiate transcription. Requires Mg(2+) as cofactor. The cofactor is Zn(2+).

It catalyses the reaction RNA(n) + a ribonucleoside 5'-triphosphate = RNA(n+1) + diphosphate. Functionally, DNA-dependent RNA polymerase catalyzes the transcription of DNA into RNA using the four ribonucleoside triphosphates as substrates. The chain is DNA-directed RNA polymerase subunit beta' from Rhodopseudomonas palustris (strain BisA53).